A 73-amino-acid chain; its full sequence is Small ribosomal subunit protein bS21 (73 aa).

The protein belongs to the bacterial ribosomal protein bS21 family.

The polypeptide is Small ribosomal subunit protein bS21 (Parvibaculum lavamentivorans (strain DS-1 / DSM 13023 / NCIMB 13966)).